The sequence spans 394 residues: Probable pectate lyase 16 (394 aa).

Residues M1–A22 form the signal peptide. Positions 192, 216, and 220 each coordinate Ca(2+). The active site involves R272.

It belongs to the polysaccharide lyase 1 family. Ca(2+) is required as a cofactor.

It catalyses the reaction Eliminative cleavage of (1-&gt;4)-alpha-D-galacturonan to give oligosaccharides with 4-deoxy-alpha-D-galact-4-enuronosyl groups at their non-reducing ends.. It functions in the pathway glycan metabolism; pectin degradation; 2-dehydro-3-deoxy-D-gluconate from pectin: step 2/5. The sequence is that of Probable pectate lyase 16 from Arabidopsis thaliana (Mouse-ear cress).